The chain runs to 474 residues: 2-succinylbenzoate--CoA ligase (474 aa).

It belongs to the ATP-dependent AMP-binding enzyme family. MenE subfamily.

The catalysed reaction is 2-succinylbenzoate + ATP + CoA = 2-succinylbenzoyl-CoA + AMP + diphosphate. The protein operates within quinol/quinone metabolism; 1,4-dihydroxy-2-naphthoate biosynthesis; 1,4-dihydroxy-2-naphthoate from chorismate: step 5/7. It participates in quinol/quinone metabolism; menaquinone biosynthesis. Its function is as follows. Converts 2-succinylbenzoate (OSB) to 2-succinylbenzoyl-CoA (OSB-CoA). This chain is 2-succinylbenzoate--CoA ligase, found in Staphylococcus epidermidis (strain ATCC 35984 / DSM 28319 / BCRC 17069 / CCUG 31568 / BM 3577 / RP62A).